Reading from the N-terminus, the 282-residue chain is MDPSLVLEQTIQDVSNLPSEFRYLLEEIGSNDLKLIEEKKKYEQKESQIHKFIRQQGSIPKHPQEDGLDKEIKESLLKCQSLQREKCVLANTALFLIARHLNKLEKNIALLEEDGVLAPVEEDGDMDSAAEASRESSVVSNSSVKKRRAASSSGSVPPTLKKKKTSRTSKLQNEIDVSSREKSVTPVSPSIEKKIARTKEFKNSRNGKGQNGSPENEEEDKTLYCFCQRVSFGEMVACDGPNCKYEWFHYDCVNLKEPPKGTWYCPECKIEMEKNKLKRKRN.

The stretch at 35–86 (LIEEKKKYEQKESQIHKFIRQQGSIPKHPQEDGLDKEIKESLLKCQSLQREK) forms a coiled coil. Positions 123–217 (DGDMDSAAEA…KGQNGSPENE (95 aa)) are disordered. The span at 129–143 (AAEASRESSVVSNSS) shows a compositional bias: low complexity. A Phosphoserine modification is found at serine 183. Threonine 185 carries the phosphothreonine modification. Serine 188 is modified (phosphoserine). Over residues 191-203 (IEKKIARTKEFKN) the composition is skewed to basic and acidic residues. Over residues 204 to 214 (SRNGKGQNGSP) the composition is skewed to polar residues. The PHD-type zinc-finger motif lies at 222–271 (TLYCFCQRVSFGEMVACDGPNCKYEWFHYDCVNLKEPPKGTWYCPECKIE). Zn(2+)-binding residues include cysteine 225, cysteine 227, cysteine 238, cysteine 243, histidine 249, cysteine 252, cysteine 265, and cysteine 268.

This sequence belongs to the ING family. Interacts with H3K4me3 and to a lesser extent with H3K4me2. Component of the NuA4 histone acetyltransferase complex composed of at least ACT1, ARP4, YAF9, VID21, SWC4, EAF3, EAF5, EAF6, EAF7, EPL1, ESA1, TRA1 and YNG2.

It is found in the nucleus. Its function is as follows. Component of the NuA4 histone acetyltransferase complex which is involved in transcriptional activation of selected genes principally by acetylation of nucleosomal histone H4 and H2A. The NuA4 complex is also involved in DNA repair. Involved in cell cycle progression and meiosis. The sequence is that of Chromatin modification-related protein YNG2 (YNG2) from Saccharomyces cerevisiae (strain ATCC 204508 / S288c) (Baker's yeast).